A 1163-amino-acid polypeptide reads, in one-letter code: DNA-directed RNA polymerase subunit beta' (1163 aa).

Positions 59, 61, 74, and 77 each coordinate Zn(2+). Mg(2+) contacts are provided by aspartate 449, aspartate 451, and aspartate 453. Residues cysteine 794, cysteine 868, cysteine 875, and cysteine 878 each contribute to the Zn(2+) site.

The protein belongs to the RNA polymerase beta' chain family. The RNAP catalytic core consists of 2 alpha, 1 beta, 1 beta' and 1 omega subunit. When a sigma factor is associated with the core the holoenzyme is formed, which can initiate transcription. Requires Mg(2+) as cofactor. It depends on Zn(2+) as a cofactor.

It carries out the reaction RNA(n) + a ribonucleoside 5'-triphosphate = RNA(n+1) + diphosphate. In terms of biological role, DNA-dependent RNA polymerase catalyzes the transcription of DNA into RNA using the four ribonucleoside triphosphates as substrates. In Caldicellulosiruptor saccharolyticus (strain ATCC 43494 / DSM 8903 / Tp8T 6331), this protein is DNA-directed RNA polymerase subunit beta'.